We begin with the raw amino-acid sequence, 332 residues long: 2,3-diketo-L-gulonate reductase (332 aa).

Histidine 44 functions as the Proton donor in the catalytic mechanism. NAD(+) contacts are provided by residues isoleucine 168–serine 174, tryptophan 224–lysine 225, and glycine 304–glutamate 306.

It belongs to the LDH2/MDH2 oxidoreductase family. DlgD subfamily. Homodimer.

The protein localises to the cytoplasm. It catalyses the reaction 3-dehydro-L-gulonate + NAD(+) = 2,3-dioxo-L-gulonate + NADH + H(+). It carries out the reaction 3-dehydro-L-gulonate + NADP(+) = 2,3-dioxo-L-gulonate + NADPH + H(+). Functionally, catalyzes the reduction of 2,3-diketo-L-gulonate in the presence of NADH, to form 3-keto-L-gulonate. In Escherichia coli (strain K12 / MC4100 / BW2952), this protein is 2,3-diketo-L-gulonate reductase.